Here is a 110-residue protein sequence, read N- to C-terminus: Large ribosomal subunit protein uL22 (110 aa).

Belongs to the universal ribosomal protein uL22 family. Part of the 50S ribosomal subunit.

This protein binds specifically to 23S rRNA; its binding is stimulated by other ribosomal proteins, e.g. L4, L17, and L20. It is important during the early stages of 50S assembly. It makes multiple contacts with different domains of the 23S rRNA in the assembled 50S subunit and ribosome. Its function is as follows. The globular domain of the protein is located near the polypeptide exit tunnel on the outside of the subunit, while an extended beta-hairpin is found that lines the wall of the exit tunnel in the center of the 70S ribosome. In Haemophilus influenzae (strain 86-028NP), this protein is Large ribosomal subunit protein uL22.